Consider the following 549-residue polypeptide: Probable protein kinase UbiB (549 aa).

In terms of domain architecture, Protein kinase spans 123-501; that stretch reads DFDDTPLASA…QQKAHKSNYL (379 aa). ATP is bound by residues 129-137 and lysine 152; that span reads LASASISQV. Aspartate 287 acts as the Proton acceptor in catalysis. 2 helical membrane passes run 498–518 and 520–540; these read SNYL…LLNQ and ATLW…VLGW.

This sequence belongs to the ABC1 family. UbiB subfamily.

Its subcellular location is the cell inner membrane. Its pathway is cofactor biosynthesis; ubiquinone biosynthesis [regulation]. Is probably a protein kinase regulator of UbiI activity which is involved in aerobic coenzyme Q (ubiquinone) biosynthesis. The chain is Probable protein kinase UbiB from Shewanella pealeana (strain ATCC 700345 / ANG-SQ1).